We begin with the raw amino-acid sequence, 415 residues long: Serine hydroxymethyltransferase (415 aa).

(6S)-5,6,7,8-tetrahydrofolate contacts are provided by residues leucine 117 and 121-123 (GHL). Lysine 226 carries the post-translational modification N6-(pyridoxal phosphate)lysine. Glutamate 241 lines the (6S)-5,6,7,8-tetrahydrofolate pocket.

It belongs to the SHMT family. Homodimer. The cofactor is pyridoxal 5'-phosphate.

The protein resides in the cytoplasm. The enzyme catalyses (6R)-5,10-methylene-5,6,7,8-tetrahydrofolate + glycine + H2O = (6S)-5,6,7,8-tetrahydrofolate + L-serine. It functions in the pathway one-carbon metabolism; tetrahydrofolate interconversion. Its pathway is amino-acid biosynthesis; glycine biosynthesis; glycine from L-serine: step 1/1. In terms of biological role, catalyzes the reversible interconversion of serine and glycine with tetrahydrofolate (THF) serving as the one-carbon carrier. This reaction serves as the major source of one-carbon groups required for the biosynthesis of purines, thymidylate, methionine, and other important biomolecules. Also exhibits THF-independent aldolase activity toward beta-hydroxyamino acids, producing glycine and aldehydes, via a retro-aldol mechanism. The chain is Serine hydroxymethyltransferase from Bacillus velezensis (strain DSM 23117 / BGSC 10A6 / LMG 26770 / FZB42) (Bacillus amyloliquefaciens subsp. plantarum).